The primary structure comprises 247 residues: Probable transcriptional regulatory protein YPK_2146 (247 aa).

The protein belongs to the TACO1 family.

The protein localises to the cytoplasm. This Yersinia pseudotuberculosis serotype O:3 (strain YPIII) protein is Probable transcriptional regulatory protein YPK_2146.